A 689-amino-acid chain; its full sequence is Calcium-responsive transcription factor (689 aa).

Disordered regions lie at residues 1-46 and 541-609; these read MEQR…PTIL and SPDG…SVPN. Positions 13-29 are enriched in basic and acidic residues; the sequence is DGEKSEREAQGFEHRTC. Polar residues-rich tracts occupy residues 541 to 559 and 578 to 601; these read SPDG…SSSP and LGQS…SSTG.

As to expression, highly expressed in brain and testis.

The protein resides in the nucleus. In terms of biological role, acts as a transcriptional activator that mediates the calcium- and neuron-selective induction of BDNF exon III transcription. Binds to the consensus calcium-response element CaRE1 5'-CTATTTCGAG-3' sequence. This Mus musculus (Mouse) protein is Calcium-responsive transcription factor (Carf).